The primary structure comprises 442 residues: Shufflon protein B (442 aa).

The constant region stretch occupies residues 1-361 (MKKYDRGWAS…TGAILSCQSG (361 aa)). The segment at 362-442 (TWKSSSASIW…SYFMKITCLK (81 aa)) is variable region.

In Escherichia coli, this protein is Shufflon protein B.